A 593-amino-acid chain; its full sequence is CTD kinase subunit alpha (593 aa).

2 stretches are compositionally biased toward polar residues: residues 1–17 and 29–51; these read MSYS…TEPN and QLSG…FKNN. Residues 1-262 form a disordered region; the sequence is MSYSKSTIYR…ESVPAPLPSP (262 aa). A phosphoserine mark is found at Ser56 and Ser58. Residues 90–103 show a composition bias toward basic residues; sequence RSRKSRRRKGKKAF. 2 positions are modified to phosphoserine: Ser104 and Ser109. Positions 139–152 are enriched in low complexity; it reads SSSSASVSPISPSA. The segment covering 160 to 170 has biased composition (polar residues); that stretch reads QASSFRRSPPS. The segment covering 198 to 215 has biased composition (low complexity); sequence IPHETTSSDTQKKSSVSS. In terms of domain architecture, Protein kinase spans 277-561; that stretch reads YEKIDQIGEG…AHETLMHEYF (285 aa). ATP is bound by residues 283–291 and Lys306; that span reads IGEGTYGKV. Residue Asp399 is the Proton acceptor of the active site.

The protein belongs to the protein kinase superfamily. CMGC Ser/Thr protein kinase family. CDC2/CDKX subfamily. CTDK-I consists of three subunits, ctk1/lsk1, ctk2/lsc1 and ctk3 (also called alpha, beta and gamma). Interacts with ctk2/lsc1. This interaction is dependent on kinase activity.

The protein resides in the nucleus. It is found in the nucleolus. The catalysed reaction is [DNA-directed RNA polymerase] + ATP = phospho-[DNA-directed RNA polymerase] + ADP + H(+). In terms of biological role, catalytic subunit of the CTDK-I complex, which hyperphosphorylates the C-terminal heptapeptide repeat domain (CTD) of the largest RNA polymerase II subunit. Involved in RNA polymerase II transcriptional elongation and pre-mRNA 3'-end processing. Together with ctk2/lsc1, required for the regulation of cytokinesis by phosphorylating 'Ser-2' residues found in the heptad repeats of the CTD. Required for nuclear localization of ctk2/lsc1. Positively regulates the septation initiation network (SIN) and promotes successful completion of cytokinesis in response to perturbation of the actomyosin ring. Acts in parallel to clp1 to promote actomyosin ring stability upon cytokinesis checkpoint activation. In Schizosaccharomyces pombe (strain 972 / ATCC 24843) (Fission yeast), this protein is CTD kinase subunit alpha.